A 273-amino-acid chain; its full sequence is Putative phosphoenolpyruvate synthase regulatory protein (273 aa).

153 to 160 serves as a coordination point for ADP; it reads GVSRCGKT.

This sequence belongs to the pyruvate, phosphate/water dikinase regulatory protein family. PSRP subfamily.

It carries out the reaction [pyruvate, water dikinase] + ADP = [pyruvate, water dikinase]-phosphate + AMP + H(+). It catalyses the reaction [pyruvate, water dikinase]-phosphate + phosphate + H(+) = [pyruvate, water dikinase] + diphosphate. Functionally, bifunctional serine/threonine kinase and phosphorylase involved in the regulation of the phosphoenolpyruvate synthase (PEPS) by catalyzing its phosphorylation/dephosphorylation. In Yersinia pseudotuberculosis serotype I (strain IP32953), this protein is Putative phosphoenolpyruvate synthase regulatory protein.